The primary structure comprises 148 residues: MAHPHQHLLTLFLTDDNGFYSYLSEKSDDEALEDINTIKKYMDFILSVLIRSKEKLENIGCSYEPMSESFKALIKVKDDGTLVKAFTKPLLNPHSEKIVLDRGYTSDFAISVIRLSSKSSYILPANTKYINPNENMYINNLISLLKRN.

Belongs to the chordopoxvirinae J1 family. In terms of assembly, homodimer. Part of a complex composed of A30, G7, F10 kinase, A15, D2, D3, and J1. Interacts with A45.

The protein resides in the virion. The protein localises to the host cytoplasm. Functionally, late protein which is a part of a large complex required for early virion morphogenesis. This complex participates in the formation of virosomes and the incorporation of virosomal contents into nascent immature virions. J1 protein is required for DNA packaging during immature virions (IV) formation. This chain is Protein J1 homolog, found in Fowlpox virus (strain NVSL) (FPV).